Reading from the N-terminus, the 435-residue chain is Histidine--tRNA ligase (435 aa).

The tract at residues 415 to 435 is disordered; sequence SVPLSAFPGDYDRPTFEDFAE. Positions 424–435 are enriched in basic and acidic residues; that stretch reads DYDRPTFEDFAE.

Belongs to the class-II aminoacyl-tRNA synthetase family.

Its subcellular location is the cytoplasm. It catalyses the reaction tRNA(His) + L-histidine + ATP = L-histidyl-tRNA(His) + AMP + diphosphate + H(+). The chain is Histidine--tRNA ligase from Haloarcula marismortui (strain ATCC 43049 / DSM 3752 / JCM 8966 / VKM B-1809) (Halobacterium marismortui).